A 91-amino-acid polypeptide reads, in one-letter code: DNA-binding protein HU (91 aa).

It belongs to the bacterial histone-like protein family. As to quaternary structure, homodimer.

Its function is as follows. Histone-like DNA-binding protein which is capable of wrapping DNA to stabilize it, and thus to prevent its denaturation under extreme environmental conditions. The chain is DNA-binding protein HU (hup) from Lactococcus lactis subsp. lactis (strain IL1403) (Streptococcus lactis).